A 250-amino-acid polypeptide reads, in one-letter code: HLA class II histocompatibility antigen, DO alpha chain (250 aa).

An N-terminal signal peptide occupies residues 1 to 25 (MALRAGLVLGFHTLMTLLSPQEAGA). Positions 26 to 110 (TKADHMGSYG…ERSNRSRAIN (85 aa)) are alpha-1. Over 26–217 (TKADHMGSYG…VPIPPPDAME (192 aa)) the chain is Extracellular. N-linked (GlcNAc...) asparagine glycans are attached at residues Asn104 and Asn144. The alpha-2 stretch occupies residues 111–204 (VPPRVTVLPK…GLDAPLLRHW (94 aa)). Residues 113–205 (PRVTVLPKSR…LDAPLLRHWE (93 aa)) form the Ig-like C1-type domain. Cys133 and Cys189 are joined by a disulfide. Residues 205 to 217 (ELQVPIPPPDAME) form a connecting peptide region. A helical transmembrane segment spans residues 218–240 (TLVCALGLAIGLVGFLVGTVLII). Over 241–250 (MGTYVSSVPR) the chain is Cytoplasmic.

This sequence belongs to the MHC class II family. Heterodimer of an alpha chain (DOA) and a beta chain (DOB). Forms a heterotetrameric complex with an HLA-DM molecule during intracellular transport in endosomal/lysosomal compartments in B-cells.

It localises to the endosome membrane. It is found in the lysosome membrane. Its function is as follows. Important modulator in the HLA class II restricted antigen presentation pathway by interaction with the HLA-DM molecule in B-cells. Modifies peptide exchange activity of HLA-DM. The sequence is that of HLA class II histocompatibility antigen, DO alpha chain (HLA-DOA) from Homo sapiens (Human).